Here is a 224-residue protein sequence, read N- to C-terminus: UPF0758 protein HEAR2468 (224 aa).

The MPN domain maps to 102 to 224; the sequence is ALNSPQAVKQ…VYSFAEQGQL (123 aa). His173, His175, and Asp186 together coordinate Zn(2+). Residues 173–186 carry the JAMM motif motif; sequence HNHPSGTPEPSAAD.

It belongs to the UPF0758 family.

In Herminiimonas arsenicoxydans, this protein is UPF0758 protein HEAR2468.